The primary structure comprises 119 residues: MITKIDKNKVRKKRHARVRSKISGTESRPRLNVFRSNKNIYAQIIDDVNGVTLASASNLDKDFGSAESKVDAASKVGELVAKRASEKGITSVTFDRGGYLYHGRVKALAEAARENGLEF.

Residues 1–25 (MITKIDKNKVRKKRHARVRSKISGT) form a disordered region. A compositionally biased stretch (basic residues) spans 9-20 (KVRKKRHARVRS).

The protein belongs to the universal ribosomal protein uL18 family. As to quaternary structure, part of the 50S ribosomal subunit; part of the 5S rRNA/L5/L18/L25 subcomplex. Contacts the 5S and 23S rRNAs.

Functionally, this is one of the proteins that bind and probably mediate the attachment of the 5S RNA into the large ribosomal subunit, where it forms part of the central protuberance. This Listeria monocytogenes serotype 4b (strain CLIP80459) protein is Large ribosomal subunit protein uL18.